The following is a 322-amino-acid chain: Acetyl-coenzyme A carboxylase carboxyl transferase subunit alpha (322 aa).

The CoA carboxyltransferase C-terminal domain maps to 30–293; sequence AVDISAEILR…KKALQDSLKL (264 aa).

The protein belongs to the AccA family. As to quaternary structure, acetyl-CoA carboxylase is a heterohexamer composed of biotin carboxyl carrier protein (AccB), biotin carboxylase (AccC) and two subunits each of ACCase subunit alpha (AccA) and ACCase subunit beta (AccD).

It is found in the cytoplasm. It catalyses the reaction N(6)-carboxybiotinyl-L-lysyl-[protein] + acetyl-CoA = N(6)-biotinyl-L-lysyl-[protein] + malonyl-CoA. Its pathway is lipid metabolism; malonyl-CoA biosynthesis; malonyl-CoA from acetyl-CoA: step 1/1. Functionally, component of the acetyl coenzyme A carboxylase (ACC) complex. First, biotin carboxylase catalyzes the carboxylation of biotin on its carrier protein (BCCP) and then the CO(2) group is transferred by the carboxyltransferase to acetyl-CoA to form malonyl-CoA. The chain is Acetyl-coenzyme A carboxylase carboxyl transferase subunit alpha from Nitrosospira multiformis (strain ATCC 25196 / NCIMB 11849 / C 71).